The sequence spans 42 residues: Photosystem I reaction center subunit IX (42 aa).

A helical transmembrane segment spans residues 7–27 (YLSVAPVLSTLWFGSLAGLLI).

It belongs to the PsaJ family.

Its subcellular location is the plastid. It localises to the chloroplast thylakoid membrane. May help in the organization of the PsaE and PsaF subunits. The chain is Photosystem I reaction center subunit IX from Lepidium virginicum (Virginia pepperweed).